Here is a 163-residue protein sequence, read N- to C-terminus: Cyclic pyranopterin monophosphate synthase (163 aa).

Residues 75 to 77 (LCH) and 113 to 114 (ME) contribute to the substrate site. Residue Asp-128 is part of the active site.

Belongs to the MoaC family. In terms of assembly, homohexamer; trimer of dimers.

The enzyme catalyses (8S)-3',8-cyclo-7,8-dihydroguanosine 5'-triphosphate = cyclic pyranopterin phosphate + diphosphate. It functions in the pathway cofactor biosynthesis; molybdopterin biosynthesis. Functionally, catalyzes the conversion of (8S)-3',8-cyclo-7,8-dihydroguanosine 5'-triphosphate to cyclic pyranopterin monophosphate (cPMP). The polypeptide is Cyclic pyranopterin monophosphate synthase (Jannaschia sp. (strain CCS1)).